A 340-amino-acid polypeptide reads, in one-letter code: Organic solute transporter subunit alpha (340 aa).

Residues Met1 to Pro48 lie on the Extracellular side of the membrane. Residues Val49–Leu69 traverse the membrane as a helical segment. The Cytoplasmic portion of the chain corresponds to Glu70–Thr87. The helical transmembrane segment at Leu88–Ile108 threads the bilayer. At Pro109–Thr118 the chain is on the extracellular side. The chain crosses the membrane as a helical span at residues Ile119–Gly139. Residues Gly140–Met181 lie on the Cytoplasmic side of the membrane. The chain crosses the membrane as a helical span at residues Leu182–Val202. The Extracellular segment spans residues Pro203–Ala218. The chain crosses the membrane as a helical span at residues Leu219–Ile239. Residues Ser240–Lys255 are Cytoplasmic-facing. A helical membrane pass occupies residues Phe256–Leu276. Over Ala277 to Ser294 the chain is Extracellular. Residues Gln295–Tyr317 traverse the membrane as a helical segment. The Cytoplasmic portion of the chain corresponds to Arg318–Ala340. Ser330 bears the Phosphoserine mark.

This sequence belongs to the OST-alpha family. As to quaternary structure, interacts with SLC51B. The Ost-alpha/Ost-beta complex is a heterodimer composed of alpha (SLC51A) and beta (SLC51B) subunit. In terms of tissue distribution, widely expressed with a high expression in ileum. Expressed in testis, colon, liver, small intestine, kidney, ovary and adrenal gland; and at low levels in heart, lung, brain, pituitary, thyroid gland, uterus, prostate, mammary gland and fat.

It is found in the cell membrane. It localises to the endoplasmic reticulum membrane. The enzyme catalyses taurocholate(out) = taurocholate(in). It catalyses the reaction estrone 3-sulfate(out) = estrone 3-sulfate(in). The catalysed reaction is dehydroepiandrosterone 3-sulfate(out) = dehydroepiandrosterone 3-sulfate(in). It carries out the reaction tauroursodeoxycholate(out) = tauroursodeoxycholate(in). The enzyme catalyses glycoursodeoxycholate(out) = glycoursodeoxycholate(in). It catalyses the reaction glycocholate(out) = glycocholate(in). The catalysed reaction is taurochenodeoxycholate(out) = taurochenodeoxycholate(in). It carries out the reaction glycochenodeoxycholate(out) = glycochenodeoxycholate(in). The enzyme catalyses taurodeoxycholate(out) = taurodeoxycholate(in). It catalyses the reaction glycodeoxycholate(out) = glycodeoxycholate(in). The catalysed reaction is prostaglandin E2(out) = prostaglandin E2(in). In terms of biological role, essential component of the Ost-alpha/Ost-beta complex, a heterodimer that acts as the intestinal basolateral transporter responsible for bile acid export from enterocytes into portal blood. Efficiently transports the major species of bile acids (taurocholate). Taurine conjugates are transported more efficiently across the basolateral membrane than glycine-conjugated bile acids. Can also transport steroids such as estrone 3-sulfate and dehydroepiandrosterone 3-sulfate, therefore playing a role in the enterohepatic circulation of sterols. Able to transport eicosanoids such as prostaglandin E2. The chain is Organic solute transporter subunit alpha (SLC51A) from Homo sapiens (Human).